A 533-amino-acid polypeptide reads, in one-letter code: Basal body-orientation factor 1 (533 aa).

The segment at Met1–Ser30 is disordered. Over residues Arg7–Asn19 the composition is skewed to basic residues. The segment covering Lys20–Ser30 has biased composition (basic and acidic residues). 2 coiled-coil regions span residues Ala34–Lys207 and Leu246–Phe368. The interaction with MNS1 and ODF2 stretch occupies residues Val277 to Ala533. Polar residues predominate over residues Gln507–Met517. Residues Gln507 to Ala533 are disordered.

This sequence belongs to the BBOF1 family. In terms of assembly, interacts with MNS1 and ODF2. Expressed exclusively in the testis and predominantly expressed in male germ cells.

The protein resides in the cytoplasm. The protein localises to the cytoskeleton. It localises to the cilium basal body. Its subcellular location is the flagellum axoneme. Plays an essential role in sperm motility and male fertility by stabilizing the sperm flagellar axonemal structure. May be required for the stability of ODF2 and MANS1 proteins. Dispensable for the assembly and function of motile cilia. The sequence is that of Basal body-orientation factor 1 from Mus musculus (Mouse).